A 254-amino-acid polypeptide reads, in one-letter code: Winged helix repair factor 1 (254 aa).

The Bipartite nuclear localization signal signature appears at Lys4 to Pro21. Winged helix domain regions lie at residues Arg32–Phe104, Pro120–Pro179, and Gly180–Thr254.

This sequence belongs to the STK19 family. Monomer in solution. Homodimer; when bound to DNA. Component of a transcription-coupled nucleotide excision repair (TC-NER) complex composed of STK19, ERCC6, ERCC8, DDA1, DDB1, ELOF1 and UVSSA which assembles and interacts with the multiprotein RNA polymerase II complex when it stalls at DNA lesions.

It is found in the nucleus. In terms of biological role, DNA-binding protein which is required for efficient transcription-coupled nucleotide excision repair (TC-NER). Acts as part of a TC-NER complex which assembles and interacts with RNA polymerase II (RNAPII) when it stalls at DNA lesions. TC-NER complex subunit UVSSA binds to the GTF2H1/p62 subunit of the TFIIH transcription factor complex, tethering TFIIH to the TC-NER complex. WHR1/STK19 then interacts with the XPD helicase subunit of TFIIH which guides TFIIH to DNA downstream of the stalled RNAPII, ensuring DNA repair. Directly interacts with RNAPII and also binds to downstream DNA. Promotes the timely removal of DNA damage-stalled RNAPII, allowing downstream NER factors to access DNA lesions. Required for monoubiquitination of UVSSA. Regulates repositioning and stabilization of UVSSA within the TC-NER complex. Stimulates ubiquitination of RNAPII complex member RBP1. Also binds to RNA and regulates the expression levels of many mRNAs. The sequence is that of Winged helix repair factor 1 from Mus musculus (Mouse).